The chain runs to 235 residues: Elongation factor Tu, chloroplastic (235 aa).

The region spanning 1 to 125 is the tr-type G domain; the sequence is KNMITGAAQM…AVDEYIPTPV (125 aa). 47–50 provides a ligand contact to GTP; that stretch reads NKQD.

The protein belongs to the TRAFAC class translation factor GTPase superfamily. Classic translation factor GTPase family. EF-Tu/EF-1A subfamily.

The protein localises to the plastid. The protein resides in the chloroplast. The enzyme catalyses GTP + H2O = GDP + phosphate + H(+). Functionally, GTP hydrolase that promotes the GTP-dependent binding of aminoacyl-tRNA to the A-site of ribosomes during protein biosynthesis. The chain is Elongation factor Tu, chloroplastic (tufA) from Gracilariopsis lemaneiformis (Red alga).